The sequence spans 426 residues: Histidinol dehydrogenase (426 aa).

NAD(+) is bound by residues Tyr125, Gln187, and Asn210. 3 residues coordinate substrate: Ser233, Gln255, and His258. Residues Gln255 and His258 each contribute to the Zn(2+) site. Residues Glu323 and His324 each act as proton acceptor in the active site. Residues His324, Asp357, Glu411, and His416 each coordinate substrate. Zn(2+) is bound at residue Asp357. His416 serves as a coordination point for Zn(2+).

Belongs to the histidinol dehydrogenase family. Zn(2+) is required as a cofactor.

The enzyme catalyses L-histidinol + 2 NAD(+) + H2O = L-histidine + 2 NADH + 3 H(+). It functions in the pathway amino-acid biosynthesis; L-histidine biosynthesis; L-histidine from 5-phospho-alpha-D-ribose 1-diphosphate: step 9/9. Catalyzes the sequential NAD-dependent oxidations of L-histidinol to L-histidinaldehyde and then to L-histidine. The sequence is that of Histidinol dehydrogenase (hisD) from Methanothermobacter thermautotrophicus (strain ATCC 29096 / DSM 1053 / JCM 10044 / NBRC 100330 / Delta H) (Methanobacterium thermoautotrophicum).